Reading from the N-terminus, the 526-residue chain is Probable DNA ligase (526 aa).

Glu-228 is an ATP binding site. Lys-230 (N6-AMP-lysine intermediate) is an active-site residue. ATP-binding residues include Arg-235, Arg-250, Glu-279, Phe-319, Arg-391, and Lys-397.

This sequence belongs to the ATP-dependent DNA ligase family. Mg(2+) is required as a cofactor.

It carries out the reaction ATP + (deoxyribonucleotide)n-3'-hydroxyl + 5'-phospho-(deoxyribonucleotide)m = (deoxyribonucleotide)n+m + AMP + diphosphate.. DNA ligase that seals nicks in double-stranded DNA during DNA replication, DNA recombination and DNA repair. This is Probable DNA ligase from Mycobacterium avium (strain 104).